Consider the following 628-residue polypeptide: NUAK family SNF1-like kinase 2 (628 aa).

Residue Met1 is modified to N-acetylmethionine. The Protein kinase domain occupies 53-303 (YEFLETLGKG…LEDVASHWWV (251 aa)). ATP is bound by residues 59-67 (LGKGTYGKV) and Lys81. The Proton acceptor role is filled by Asp175. Position 208 is a phosphothreonine; by LKB1 (Thr208). The disordered stretch occupies residues 355 to 493 (KQHAPGGGST…KEQKPPQASG (139 aa)). Phosphoserine is present on Ser435. The segment covering 457-469 (SGYYSSPEPSESG) has biased composition (low complexity). Ser523, Ser544, Ser547, and Ser573 each carry phosphoserine. Residues 531–562 (RPLARASRPSGAVSEDSILSSESFDQLDLPER) are disordered.

It belongs to the protein kinase superfamily. CAMK Ser/Thr protein kinase family. SNF1 subfamily. Mg(2+) is required as a cofactor. In terms of processing, phosphorylated at Thr-208 by STK11/LKB1 in complex with STE20-related adapter-alpha (STRADA) pseudo kinase and CAB39. Autophosphorylation is also possible at Thr-208.

It carries out the reaction L-seryl-[protein] + ATP = O-phospho-L-seryl-[protein] + ADP + H(+). The catalysed reaction is L-threonyl-[protein] + ATP = O-phospho-L-threonyl-[protein] + ADP + H(+). Its activity is regulated as follows. Activated by phosphorylation on Thr-208. Functionally, stress-activated kinase involved in tolerance to glucose starvation. Induces cell-cell detachment by increasing F-actin conversion to G-actin. Expression is induced by CD95 or TNF-alpha, via NF-kappa-B. Protects cells from CD95-mediated apoptosis and is required for the increased motility and invasiveness of CD95-activated tumor cells. Phosphorylates LATS1 and LATS2. Plays a key role in neural tube closure during embryonic development through LATS2 phosphorylation and regulation of the nuclear localization of YAP1 a critical downstream regulatory target in the Hippo signaling pathway. This Homo sapiens (Human) protein is NUAK family SNF1-like kinase 2.